A 102-amino-acid polypeptide reads, in one-letter code: Small ribosomal subunit protein uS10 (102 aa).

It belongs to the universal ribosomal protein uS10 family. In terms of assembly, part of the 30S ribosomal subunit.

Involved in the binding of tRNA to the ribosomes. In Gluconobacter oxydans (strain 621H) (Gluconobacter suboxydans), this protein is Small ribosomal subunit protein uS10.